Consider the following 96-residue polypeptide: Co-chaperonin GroES (96 aa).

The protein belongs to the GroES chaperonin family. As to quaternary structure, heptamer of 7 subunits arranged in a ring. Interacts with the chaperonin GroEL.

Its subcellular location is the cytoplasm. In terms of biological role, together with the chaperonin GroEL, plays an essential role in assisting protein folding. The GroEL-GroES system forms a nano-cage that allows encapsulation of the non-native substrate proteins and provides a physical environment optimized to promote and accelerate protein folding. GroES binds to the apical surface of the GroEL ring, thereby capping the opening of the GroEL channel. The polypeptide is Co-chaperonin GroES (Hyphomonas neptunium (strain ATCC 15444)).